Consider the following 214-residue polypeptide: Large ribosomal subunit protein uL3 (214 aa).

The span at 132-145 (SNRASHGNSVTTRA) shows a compositional bias: polar residues. Positions 132–155 (SNRASHGNSVTTRAPGSIGQAQDP) are disordered. N5-methylglutamine is present on Gln153.

Belongs to the universal ribosomal protein uL3 family. Part of the 50S ribosomal subunit. Forms a cluster with proteins L14 and L19. In terms of processing, methylated by PrmB.

One of the primary rRNA binding proteins, it binds directly near the 3'-end of the 23S rRNA, where it nucleates assembly of the 50S subunit. This is Large ribosomal subunit protein uL3 from Laribacter hongkongensis (strain HLHK9).